The chain runs to 258 residues: Acetylglutamate kinase (258 aa).

Substrate-binding positions include 40–41 (GG), Arg62, and Asn158.

It belongs to the acetylglutamate kinase family. ArgB subfamily.

It localises to the cytoplasm. It carries out the reaction N-acetyl-L-glutamate + ATP = N-acetyl-L-glutamyl 5-phosphate + ADP. The protein operates within amino-acid biosynthesis; L-arginine biosynthesis; N(2)-acetyl-L-ornithine from L-glutamate: step 2/4. Its function is as follows. Catalyzes the ATP-dependent phosphorylation of N-acetyl-L-glutamate. The sequence is that of Acetylglutamate kinase from Azobacteroides pseudotrichonymphae genomovar. CFP2.